Here is a 37-residue protein sequence, read N- to C-terminus: Large ribosomal subunit protein bL36c (37 aa).

This sequence belongs to the bacterial ribosomal protein bL36 family.

It localises to the plastid. The protein localises to the chloroplast. The protein is Large ribosomal subunit protein bL36c (rpl36) of Pisum sativum (Garden pea).